Consider the following 353-residue polypeptide: Inactive ADP-ribosyltransferase ARH2 (353 aa).

Ser27 carries the phosphoserine modification.

This sequence belongs to the ADP-ribosylglycohydrolase family.

The protein localises to the cytoplasm. The protein resides in the myofibril. Its subcellular location is the sarcomere. Functionally, required for myofibril assembly and outgrowth of the cardiac chambers in the developing heart. Appears to be catalytically inactive, showing no activity against O-acetyl-ADP-ribose. The polypeptide is Inactive ADP-ribosyltransferase ARH2 (Adprhl1) (Rattus norvegicus (Rat)).